A 3106-amino-acid chain; its full sequence is Probable polyketide synthase 29 (3106 aa).

Positions 1–11 are enriched in polar residues; it reads MVQNTDNTRNS. Residues 1-20 are disordered; that stretch reads MVQNTDNTRNSKLIRDRNDY. The Ketosynthase family 3 (KS3) domain maps to 28–461; that stretch reads SGDIAVIGIG…GSNVCLILSE (434 aa). Catalysis depends on for beta-ketoacyl synthase activity residues Cys-200, His-339, and His-384. The segment at 661–694 is acyl/malonyl transferase; the sequence is GVSADIIIGHSLGEVSSPYCSGMIDFQTLCYLTY. Ser-671 functions as the For acyl/malonyl transferase activity in the catalytic mechanism. Residues 961–1082 are N-terminal hotdog fold; it reads PSIHGLGNNT…GNFSLTKHNS (122 aa). The PKS/mFAS DH domain maps to 961-1266; it reads PSIHGLGNNT…CALVSLDSNP (306 aa). The active-site Proton acceptor; for dehydratase activity is the His-994. Residues 1099–1266 form a C-terminal hotdog fold region; that stretch reads NFTSISKQDF…CALVSLDSNP (168 aa). The active-site Proton donor; for dehydratase activity is Asp-1171. A Carrier domain is found at 2533–2610; it reads NNNEIIRSTI…QSIEIILSAH (78 aa). O-(pantetheine 4'-phosphoryl)serine is present on Ser-2570. Residues 2609–2656 adopt a coiled-coil conformation; sequence AHNNNNKNNNNNNNINNNNKNNNNNNNKNNNNINNNINNNKNNNNNNN. The tract at residues 2614–2656 is disordered; it reads NKNNNNNNNINNNNKNNNNNNNKNNNNINNNINNNKNNNNNNN.

Pantetheine 4'-phosphate serves as cofactor.

In terms of biological role, probable polyketide synthase. The polypeptide is Probable polyketide synthase 29 (pks29) (Dictyostelium discoideum (Social amoeba)).